The primary structure comprises 832 residues: DNA polymerase I, thermostable (832 aa).

Residues 175–260 (RPDQWADYRA…DLPLEVDFAK (86 aa)) enclose the 5'-3' exonuclease domain. The polymerase stretch occupies residues 410 to 832 (ERLFANLWGR…IGEDWLSAKE (423 aa)).

This sequence belongs to the DNA polymerase type-A family.

The enzyme catalyses DNA(n) + a 2'-deoxyribonucleoside 5'-triphosphate = DNA(n+1) + diphosphate. In terms of biological role, in addition to polymerase activity, this DNA polymerase exhibits 5'-3' exonuclease activity. Unlikely to have 3'-5' exonuclease activity due to absence of a 3'-5' exonuclease domain. This is DNA polymerase I, thermostable (polA) from Thermus aquaticus.